The primary structure comprises 415 residues: MEPIWLLLLLAIFTVSVSAQFNGYNCDANQHSRFPAERDITVYCGVQTITMKINFCTVLFSGYSESDLSLNGKHGDAHCRGFINNNTFPAVVIFTINLSTLESCENSLVVSTVPGVNAYGIASMVQIGNISGYIDTPDPPTIISYLPGLLYKFSCSYPLEYLVNNTQLASSSAAISVREGNGTFISTLNLLLYNDSTYSQQLLIPSAGLPLKTKIYAAVRATNLDGRWNVLMDYCYTTPSGNPSDDIRYDLFLSCDKDPQTTIFENGKSQMGRFSFEVFRFVKHKNQKMSTVFLHCITKLCRSDDCHYLTPTCHNRDRRDAVIRTTLTPYSLSGNAVVSAGPIITRSDETPANNSQLAHPGNQQFQINSVTSALISGVVILGATSLSFFIIALTLLNRKKQNSLVLCGIRNPVFN.

The first 19 residues, 1–19 (MEPIWLLLLLAIFTVSVSA), serve as a signal peptide directing secretion. The Extracellular portion of the chain corresponds to 20–372 (QFNGYNCDAN…QQFQINSVTS (353 aa)). Positions 43 to 320 (YCGVQTITMK…PTCHNRDRRD (278 aa)) constitute a ZP domain. Intrachain disulfides connect C44–C155, C79–C104, C235–C296, and C255–C313. Residues 373–393 (ALISGVVILGATSLSFFIIAL) form a helical membrane-spanning segment. The Cytoplasmic segment spans residues 394–415 (TLLNRKKQNSLVLCGIRNPVFN).

Proteolytically cleaved before the transmembrane segment to yield the secreted form found in the extracellular matrix of the cupula.

The protein localises to the cytoplasmic vesicle membrane. It is found in the secreted. The protein resides in the extracellular space. Its subcellular location is the extracellular matrix. Its function is as follows. Glycoprotein which is a component of the gelatinous extracellular matrix in the cupulae of the vestibular organ. This Xenopus laevis (African clawed frog) protein is Zona pellucida-like domain-containing protein 1 (zpld1).